Reading from the N-terminus, the 367-residue chain is Peptide chain release factor 2 (367 aa).

An N5-methylglutamine modification is found at glutamine 250.

The protein belongs to the prokaryotic/mitochondrial release factor family. Post-translationally, methylated by PrmC. Methylation increases the termination efficiency of RF2.

It is found in the cytoplasm. In terms of biological role, peptide chain release factor 2 directs the termination of translation in response to the peptide chain termination codons UGA and UAA. The chain is Peptide chain release factor 2 from Saccharopolyspora erythraea (strain ATCC 11635 / DSM 40517 / JCM 4748 / NBRC 13426 / NCIMB 8594 / NRRL 2338).